The primary structure comprises 352 residues: Probable tyrosine-protein kinase DDB_G0290471 (352 aa).

One can recognise a Protein kinase domain in the interval 51-333; it reads IEYVCRLGSG…ISLNQIRSFY (283 aa). ATP is bound by residues 57–65 and Lys-78; that span reads LGSGSLCRV. The active-site Proton acceptor is Asp-175.

Belongs to the protein kinase superfamily. TKL Tyr protein kinase family.

It catalyses the reaction L-tyrosyl-[protein] + ATP = O-phospho-L-tyrosyl-[protein] + ADP + H(+). This is Probable tyrosine-protein kinase DDB_G0290471 from Dictyostelium discoideum (Social amoeba).